A 78-amino-acid chain; its full sequence is NAD(P)H-quinone oxidoreductase subunit O (78 aa).

This sequence belongs to the complex I NdhO subunit family. As to quaternary structure, NDH-1 can be composed of about 15 different subunits; different subcomplexes with different compositions have been identified which probably have different functions.

It localises to the cellular thylakoid membrane. It catalyses the reaction a plastoquinone + NADH + (n+1) H(+)(in) = a plastoquinol + NAD(+) + n H(+)(out). The enzyme catalyses a plastoquinone + NADPH + (n+1) H(+)(in) = a plastoquinol + NADP(+) + n H(+)(out). Its function is as follows. NDH-1 shuttles electrons from an unknown electron donor, via FMN and iron-sulfur (Fe-S) centers, to quinones in the respiratory and/or the photosynthetic chain. The immediate electron acceptor for the enzyme in this species is believed to be plastoquinone. Couples the redox reaction to proton translocation, and thus conserves the redox energy in a proton gradient. Cyanobacterial NDH-1 also plays a role in inorganic carbon-concentration. The chain is NAD(P)H-quinone oxidoreductase subunit O from Prochlorococcus marinus (strain AS9601).